We begin with the raw amino-acid sequence, 232 residues long: Rho-related GTP-binding protein Rho6 (232 aa).

Residues 23–28 (QCGKTA), 38–45 (YPETYVPT), 67–71 (DTSGS), 125–128 (CKTD), and 169–170 (AF) each bind GTP. The short motif at 42–50 (YVPTVFENY) is the Effector region element. Cysteine 229 carries the post-translational modification Cysteine methyl ester. Cysteine 229 carries the S-geranylgeranyl cysteine lipid modification. The propeptide at 230 to 232 (SIM) is removed in mature form.

This sequence belongs to the small GTPase superfamily. Rho family. As to quaternary structure, binds GRB7 and PLXNB1. Interacts with PLXNA2. Interacts with UBXD5.

It is found in the cell membrane. It localises to the cytoplasm. The protein localises to the cytoskeleton. Its function is as follows. Lacks intrinsic GTPase activity. Has a low affinity for GDP, and constitutively binds GTP. Controls rearrangements of the actin cytoskeleton. Induces the Rac-dependent neuritic process formation in part by disruption of the cortical actin filaments. Causes the formation of many neuritic processes from the cell body with disruption of the cortical actin filaments. The polypeptide is Rho-related GTP-binding protein Rho6 (Rnd1) (Mus musculus (Mouse)).